The following is a 365-amino-acid chain: Peptide chain release factor 2 (365 aa).

An N5-methylglutamine modification is found at Gln252.

The protein belongs to the prokaryotic/mitochondrial release factor family. In terms of processing, methylated by PrmC. Methylation increases the termination efficiency of RF2.

Its subcellular location is the cytoplasm. Its function is as follows. Peptide chain release factor 2 directs the termination of translation in response to the peptide chain termination codons UGA and UAA. This Yersinia pseudotuberculosis serotype O:1b (strain IP 31758) protein is Peptide chain release factor 2.